The following is a 131-amino-acid chain: Small ribosomal subunit protein bS6 (131 aa).

This sequence belongs to the bacterial ribosomal protein bS6 family.

In terms of biological role, binds together with bS18 to 16S ribosomal RNA. In Borrelia hermsii (strain HS1 / DAH), this protein is Small ribosomal subunit protein bS6.